A 373-amino-acid chain; its full sequence is MTDVELRVEALSLSDVSAIPPEYVRLEEERTDLGDALEVARAASDDADAARIPVVDISAFDGDGRRACVEAVRAAAEEWGVMHIAGHGLPGDVLDRLRAAGEAFFALPIAEKEAYANDPAAGRLQGYGSKLAANASGKREWEDYLFHLVHPDHLADHSLWPANPPEYVPVSRDFGGRVRTLASKLLAILSLGLGLPEETLERRLRRHDQHGVDDDLLLQLKINYYPRCPRPDLAVGVEAHTDVSALSFILHNGVPGLQAHHAGTWVTARSEQGTIVVHVGDALEILTNGRYTSVLHRSLVSRDAVRVSWVVFCEPPPESVLLQPLPELLANGAGKPLFAPRTFKQHVQRKLFKKLKDQQDNNAAAASNGIIPK.

In terms of domain architecture, Fe2OG dioxygenase spans 216 to 315 (LLLQLKINYY…RVSWVVFCEP (100 aa)). Fe cation-binding residues include H240, D242, and H296. R306 lines the 2-oxoglutarate pocket.

The protein belongs to the iron/ascorbate-dependent oxidoreductase family. It depends on L-ascorbate as a cofactor. Requires Fe(2+) as cofactor.

It carries out the reaction a (2R,3S,4S)-leucoanthocyanidin + 2-oxoglutarate + O2 = a 4-H-anthocyanidin with a 3-hydroxy group + succinate + CO2 + 2 H2O. Its pathway is pigment biosynthesis; anthocyanin biosynthesis. In terms of biological role, involved in anthocyanin and protoanthocyanidin biosynthesis by catalyzing the oxidation of leucoanthocyanidins into anthocyanidins. The polypeptide is Leucoanthocyanidin dioxygenase 2 (Oryza sativa subsp. japonica (Rice)).